Reading from the N-terminus, the 470-residue chain is 3-isopropylmalate dehydratase large subunit (470 aa).

Residues 50-121 (NVARGCQHRH…PCGRPGAGRH (72 aa)) form a disordered region. The [4Fe-4S] cluster site is built by C349, C409, and C412.

This sequence belongs to the aconitase/IPM isomerase family. LeuC type 1 subfamily. In terms of assembly, heterodimer of LeuC and LeuD. [4Fe-4S] cluster serves as cofactor.

It carries out the reaction (2R,3S)-3-isopropylmalate = (2S)-2-isopropylmalate. It functions in the pathway amino-acid biosynthesis; L-leucine biosynthesis; L-leucine from 3-methyl-2-oxobutanoate: step 2/4. Its function is as follows. Catalyzes the isomerization between 2-isopropylmalate and 3-isopropylmalate, via the formation of 2-isopropylmaleate. This Azotobacter vinelandii protein is 3-isopropylmalate dehydratase large subunit.